The sequence spans 55 residues: Lantibiotic epilancin 15X (55 aa).

Positions 1–24 (MKKELFDLNLNKDIEAQKSDLNPQ) are cleaved as a propeptide — cleaved by ElxP. Serine 25 carries the post-translational modification D-lactate; by the dehydratase ElxB and the dehydrogenase ElxO. A 2,3-didehydroalanine (Ser); by the dehydratase ElxB modification is found at serine 27. 2,3-didehydrobutyrine; by the dehydratase ElxB is present on residues threonine 31 and threonine 32. The lanthionine (Ser-Cys); by the dehydratase ElxB and the cyclase ElxC cross-link spans 36–40 (SKKLC). Cross-links (beta-methyllanthionine (Thr-Cys); by the dehydratase ElxB and the cyclase ElxC) lie at residues 44–47 (TLTC) and 46–49 (TCGC). Threonine 52 carries the 2,3-didehydrobutyrine; by the dehydratase ElxB modification.

In terms of processing, maturation of this lantibiotic involves the enzymatic conversion of Thr, and Ser into dehydrated AA by ElxB and the formation of thioether bonds with cysteine by the cyclase ElxC. The next steps are cleavage of the leader peptide by ElxP and membrane translocation by ElxT. The leader peptide may be removed before membrane translocation, in contrast to other lantibiotics for which the cleavage occur after translocation. This is suggested by the probable cytoplasmic localization of the serine protease ElxP that cleaves the leader peptide. The N-terminal D-lactate is probably produced by dehydration of Ser-25 by ElxB, followed by proteolytic removal of the leader peptide by the serine protease ElxP and hydrolysis of the resulting new N-terminal dehydroalanine. This hydrolysis may occur spontaneously. The pyruvate group thus formed is reduced to D-lactate by the NADPH-dependent oxidoreductase ElxO. This N-terminal D-lactate protects the lantibiotic against degradation against aminopeptidase. Post-translationally, it is not established whether the 2,3-didehydrobutyrines are the E- or Z-isomers.

Its function is as follows. Lanthionine-containing peptide antibiotic (lantibiotic) active on Gram-positive bacteria such as staphylococci, enterococci and streptococci. The bactericidal activity of lantibiotics is based on depolarization of energized bacterial cytoplasmic membranes, initiated by the formation of aqueous transmembrane pores. In Staphylococcus epidermidis, this protein is Lantibiotic epilancin 15X.